The chain runs to 846 residues: Rho GTPase-activating protein 12 (846 aa).

The SH3 domain maps to 12 to 74 (PGQVYIEVEY…PAQYVKEVTR (63 aa)). Residues 152–175 (LTHNNGKFNNDSHSPKVSSQNRTR) are compositionally biased toward polar residues. The interval 152 to 241 (LTHNNGKFNN…PPNQGRPDSP (90 aa)) is disordered. A phosphoserine mark is found at Ser165 and Ser176. The span at 191–200 (TSFSQEQSCD) shows a compositional bias: polar residues. Phosphoserine occurs at positions 201, 213, and 215. A compositionally biased stretch (polar residues) spans 224 to 234 (TEQIRATTPPN). Phosphothreonine is present on residues Thr230 and Thr231. A Phosphoserine modification is found at Ser240. Tyr243 carries the phosphotyrosine modification. WW domains are found at residues 265–298 (IQIN…PPRW) and 358–391 (DYTN…LPKY). Residues 293-316 (WKPPRWTRDASISKGDFQNPGDQE) form a disordered region. Disordered stretches follow at residues 428-466 (DTND…DQEK) and 580-629 (ETDE…TKKN). Residues 445–461 (NESSPSSPKHQDTASSP) show a composition bias toward polar residues. Residues 463–575 (DQEKYGLLNV…WFKVLSSTIN (113 aa)) form the PH domain. Residues 580–590 (ETDEGIEEEIP) show a composition bias toward acidic residues. Ser592 bears the Phosphoserine mark. Basic and acidic residues predominate over residues 594 to 609 (GIEKHDKEKEQKDPKK). The Rho-GAP domain maps to 656-844 (SNLANLCQRE…LILLELSSIF (189 aa)).

Its function is as follows. GTPase activator for the Rho-type GTPases by converting them to an inactive GDP-bound state. In Homo sapiens (Human), this protein is Rho GTPase-activating protein 12 (ARHGAP12).